Consider the following 433-residue polypeptide: Phosphomethylpyrimidine synthase 2 (433 aa).

Residues Asn66, Met94, Tyr123, His162, 184 to 186 (SRG), 225 to 228 (DALR), and Glu264 each bind substrate. A Zn(2+)-binding site is contributed by His268. Residue Tyr291 participates in substrate binding. Residue His332 participates in Zn(2+) binding. Cys408, Cys411, and Cys415 together coordinate [4Fe-4S] cluster.

This sequence belongs to the ThiC family. [4Fe-4S] cluster serves as cofactor.

The catalysed reaction is 5-amino-1-(5-phospho-beta-D-ribosyl)imidazole + S-adenosyl-L-methionine = 4-amino-2-methyl-5-(phosphooxymethyl)pyrimidine + CO + 5'-deoxyadenosine + formate + L-methionine + 3 H(+). It participates in cofactor biosynthesis; thiamine diphosphate biosynthesis. Functionally, catalyzes the synthesis of the hydroxymethylpyrimidine phosphate (HMP-P) moiety of thiamine from aminoimidazole ribotide (AIR) in a radical S-adenosyl-L-methionine (SAM)-dependent reaction. The polypeptide is Phosphomethylpyrimidine synthase 2 (Saccharolobus solfataricus (strain ATCC 35092 / DSM 1617 / JCM 11322 / P2) (Sulfolobus solfataricus)).